Consider the following 306-residue polypeptide: Beta-lactamase 1 (306 aa).

An N-terminal signal peptide occupies residues 1-43; it reads MKNKRMLKIGMCVGILGLSVTSLEAFTGGALQVEAKEKTGQVK. S89 serves as the catalytic Acyl-ester intermediate. E185 functions as the Proton acceptor in the catalytic mechanism. 251 to 253 is a substrate binding site; the sequence is KSG.

The protein belongs to the class-A beta-lactamase family.

It catalyses the reaction a beta-lactam + H2O = a substituted beta-amino acid. In terms of biological role, this protein is a beta-lactamase with a substrate specificity for penicillins. The sequence is that of Beta-lactamase 1 (blaCI) from Bacillus mycoides.